We begin with the raw amino-acid sequence, 318 residues long: Aspartate carbamoyltransferase catalytic subunit (318 aa).

Positions 54 and 55 each coordinate carbamoyl phosphate. Lysine 82 is an L-aspartate binding site. 3 residues coordinate carbamoyl phosphate: arginine 104, histidine 134, and glutamine 137. L-aspartate contacts are provided by arginine 174 and arginine 230. Carbamoyl phosphate contacts are provided by glycine 271 and proline 272.

It belongs to the aspartate/ornithine carbamoyltransferase superfamily. ATCase family. Heterododecamer (2C3:3R2) of six catalytic PyrB chains organized as two trimers (C3), and six regulatory PyrI chains organized as three dimers (R2).

The enzyme catalyses carbamoyl phosphate + L-aspartate = N-carbamoyl-L-aspartate + phosphate + H(+). The protein operates within pyrimidine metabolism; UMP biosynthesis via de novo pathway; (S)-dihydroorotate from bicarbonate: step 2/3. Catalyzes the condensation of carbamoyl phosphate and aspartate to form carbamoyl aspartate and inorganic phosphate, the committed step in the de novo pyrimidine nucleotide biosynthesis pathway. This chain is Aspartate carbamoyltransferase catalytic subunit, found in Clavibacter michiganensis subsp. michiganensis (strain NCPPB 382).